The chain runs to 395 residues: Syncephapepsin (395 aa).

The first 19 residues, 1–19 (MKFSLALLATVALATISQA), serve as a signal peptide directing secretion. Residues 20-71 (APVEKQVAGKPFQLVKNPHYQANATRAIFRAEKKYARHTAIPEQGKTIVKSA) constitute a propeptide, activation peptide. A Peptidase A1 domain is found at 89 to 391 (YYATVSVGTP…NQGVPEVQIA (303 aa)). Aspartate 107 is an active-site residue. Cysteines 120 and 123 form a disulfide. Residue aspartate 288 is part of the active site. A disulfide bond links cysteine 322 and cysteine 355.

This sequence belongs to the peptidase A1 family. Monomer.

Functionally, hydrolysis of proteins with a broad specificity. Residues recognized to be cleaved were primarily those of trypsin and chymotrypsin and Lys was the most susceptible. The chain is Syncephapepsin (SPSR) from Syncephalastrum racemosum (Filamentous fungus).